Consider the following 86-residue polypeptide: Small ribosomal subunit protein bS20 (86 aa).

The tract at residues 1 to 25 (MANIKSQMKRIKTNEANRQRNKAVK) is disordered.

Belongs to the bacterial ribosomal protein bS20 family.

Functionally, binds directly to 16S ribosomal RNA. The protein is Small ribosomal subunit protein bS20 of Saccharopolyspora erythraea (strain ATCC 11635 / DSM 40517 / JCM 4748 / NBRC 13426 / NCIMB 8594 / NRRL 2338).